A 487-amino-acid chain; its full sequence is Histamine H1 receptor (487 aa).

The Extracellular portion of the chain corresponds to 1 to 29; that stretch reads MSLPNSSCLLEDKMCESNKTTMASPQLMP. N-linked (GlcNAc...) asparagine glycosylation is found at N5 and N18. The helical transmembrane segment at 30–50 threads the bilayer; it reads LVVVLSTICLVTVGLNLLVLY. The Cytoplasmic portion of the chain corresponds to 51–64; the sequence is AVRSERKLHTVGNL. Residues 65–89 traverse the membrane as a helical segment; the sequence is YIVSLSVADLIVGAVVMPMNILYLL. Residues 90–97 lie on the Extracellular side of the membrane; the sequence is MSKWSLGR. A helical transmembrane segment spans residues 98–123; sequence PLCLFWLSMDYVASTASIFSVFILCI. C100 and C180 are oxidised to a cystine. Positions 107 and 112 each coordinate histamine. Positions 107 to 112 are important for agonist binding; the sequence is DYVAST. Residues 124–144 lie on the Cytoplasmic side of the membrane; it reads DRYRSVQQPLRYLKYRTKTRA. 2 positions are modified to phosphothreonine: T140 and T142. The helical transmembrane segment at 145–164 threads the bilayer; the sequence is SATILGAWFLSFLWVIPILG. Residues 165–188 lie on the Extracellular side of the membrane; the sequence is WNHFMQQTSVRREDKCETDFYDVT. The helical transmembrane segment at 189–211 threads the bilayer; the sequence is WFKVMTAIINFYLPTLLMLWFYA. A histamine-binding site is contributed by N198. The Cytoplasmic segment spans residues 212–416; that stretch reads KIYKAVRQHC…MNRERKAAKQ (205 aa). A Phosphoserine modification is found at S230. Residues 238-261 show a composition bias toward basic and acidic residues; sequence KLRPENPKGDAKKPGKESPWEVLK. Residues 238 to 292 form a disordered region; sequence KLRPENPKGDAKKPGKESPWEVLKRKPKDAGGGSVLKSPSQTPKEMKSPVVFSQE. A Phosphothreonine modification is found at T279. Phosphoserine occurs at positions 344 and 347. The disordered stretch occupies residues 345–377; sequence EISEDQMLGDSQSFSRTDSDTTTETASGKGKLR. Positions 353–370 are enriched in polar residues; that stretch reads GDSQSFSRTDSDTTTETA. Residues S380, S396, and S398 each carry the phosphoserine modification. The chain crosses the membrane as a helical span at residues 417 to 440; the sequence is LGFIMAAFILCWIPYFIFFMVIAF. Residues 424-428 are important for agonist binding; the sequence is FILCW. Y431 contributes to the histamine binding site. A disulfide bridge connects residues C441 and C444. The Extracellular segment spans residues 441–446; sequence CKNCCN. The helical transmembrane segment at 447–469 threads the bilayer; the sequence is EHLHMFTIWLGYINSTLNPLIYP. At 470–487 the chain is on the cytoplasmic side; it reads LCNENFKKTFKRILHIRS.

The protein belongs to the G-protein coupled receptor 1 family. Post-translationally, phosphorylation at sites in the second and third cytoplasmic loops independently contribute to agonist-induced receptor down-regulation.

The protein resides in the cell membrane. Its function is as follows. G-protein-coupled receptor for histamine, a biogenic amine that functions as an immune modulator and a neurotransmitter. Through the H1 receptor, histamine mediates the contraction of smooth muscles and increases capillary permeability due to contraction of terminal venules. Also mediates neurotransmission in the central nervous system and thereby regulates circadian rhythms, emotional and locomotor activities as well as cognitive functions. The sequence is that of Histamine H1 receptor from Gorilla gorilla gorilla (Western lowland gorilla).